A 427-amino-acid polypeptide reads, in one-letter code: Phosphomethylpyrimidine synthase (427 aa).

Substrate is bound by residues Asn-66, Met-95, Tyr-124, His-163, 185–187 (SRG), 226–229 (DGLR), and Glu-265. Zn(2+) is bound at residue His-269. Substrate is bound at residue Tyr-292. A Zn(2+)-binding site is contributed by His-333. Residues Cys-409, Cys-412, and Cys-416 each coordinate [4Fe-4S] cluster.

The protein belongs to the ThiC family. As to quaternary structure, homodimer. Requires [4Fe-4S] cluster as cofactor.

The catalysed reaction is 5-amino-1-(5-phospho-beta-D-ribosyl)imidazole + S-adenosyl-L-methionine = 4-amino-2-methyl-5-(phosphooxymethyl)pyrimidine + CO + 5'-deoxyadenosine + formate + L-methionine + 3 H(+). It participates in cofactor biosynthesis; thiamine diphosphate biosynthesis. Functionally, catalyzes the synthesis of the hydroxymethylpyrimidine phosphate (HMP-P) moiety of thiamine from aminoimidazole ribotide (AIR) in a radical S-adenosyl-L-methionine (SAM)-dependent reaction. This chain is Phosphomethylpyrimidine synthase, found in Syntrophus aciditrophicus (strain SB).